The sequence spans 188 residues: ATP synthase subunit b (188 aa).

A helical transmembrane segment spans residues 21–41 (ILPHLGELIVGIIFAIIIYAV).

It belongs to the ATPase B chain family. As to quaternary structure, F-type ATPases have 2 components, F(1) - the catalytic core - and F(0) - the membrane proton channel. F(1) has five subunits: alpha(3), beta(3), gamma(1), delta(1), epsilon(1). F(0) has three main subunits: a(1), b(2) and c(10-14). The alpha and beta chains form an alternating ring which encloses part of the gamma chain. F(1) is attached to F(0) by a central stalk formed by the gamma and epsilon chains, while a peripheral stalk is formed by the delta and b chains.

Its subcellular location is the cell membrane. F(1)F(0) ATP synthase produces ATP from ADP in the presence of a proton or sodium gradient. F-type ATPases consist of two structural domains, F(1) containing the extramembraneous catalytic core and F(0) containing the membrane proton channel, linked together by a central stalk and a peripheral stalk. During catalysis, ATP synthesis in the catalytic domain of F(1) is coupled via a rotary mechanism of the central stalk subunits to proton translocation. Its function is as follows. Component of the F(0) channel, it forms part of the peripheral stalk, linking F(1) to F(0). This chain is ATP synthase subunit b, found in Kineococcus radiotolerans (strain ATCC BAA-149 / DSM 14245 / SRS30216).